A 391-amino-acid chain; its full sequence is Phosphoglycerate kinase (391 aa).

Substrate-binding positions include 21–23, Arg-36, 59–62, Arg-113, and Arg-146; these read DMN and HLGR. ATP contacts are provided by residues Lys-197, Glu-319, and 345–348; that span reads GGDT.

It belongs to the phosphoglycerate kinase family. In terms of assembly, monomer.

It is found in the cytoplasm. It carries out the reaction (2R)-3-phosphoglycerate + ATP = (2R)-3-phospho-glyceroyl phosphate + ADP. Its pathway is carbohydrate degradation; glycolysis; pyruvate from D-glyceraldehyde 3-phosphate: step 2/5. This is Phosphoglycerate kinase from Chromobacterium violaceum (strain ATCC 12472 / DSM 30191 / JCM 1249 / CCUG 213 / NBRC 12614 / NCIMB 9131 / NCTC 9757 / MK).